The primary structure comprises 160 residues: MPAFDIVSEVDNVELKNAVDNATRELATRFDFRGVDASFELKGENIKIKAEDDFQLTQLVDILRGNLAKRGVDARSMDVKDAVHSGKNFYQDIDFKQGIDPLISKKLVKEIKASKVKVQAAIQGEQLRITGKNRDDLQAAMAIVREGDFGQPFQFTNFRD.

Belongs to the YajQ family.

Nucleotide-binding protein. This chain is Nucleotide-binding protein VSAL_I1728, found in Aliivibrio salmonicida (strain LFI1238) (Vibrio salmonicida (strain LFI1238)).